The sequence spans 376 residues: MAKQDYYEILGVSKTAEEREIKKAYKRLAMKYHPDRNQGDKEAETKFKEIKEAYEVLTDSQKRAAYDQYGHAAFEQGGMGGGGFGGGADFSDIFGDVFGDIFGGGRGRQRAARGADLRYNMELTLEEAVRGVTKEIRIPTLEECDVCHGSGAKPGTQPQTCPTCHGSGQVQMRQGFFAVQQTCPHCQGRGTLIKDPCNKCHGHGRVERSKTLSVKIPAGVDTGDRIRLAGEGEAGEHGAPAGDLYVQVQVKQHPIFEREGNNLYCEVPINFAMAALGGEIEVPTLDGRVKLKVPGETQTGKLFRMRGKGVKSVRGGAQGDLLCRVVVETPVGLNEKQKQLLQELQESFGGPTGEHNSPRSKSFFDGVKKFFDDLTR.

One can recognise a J domain in the interval 5–70; that stretch reads DYYEILGVSK…QKRAAYDQYG (66 aa). A CR-type zinc finger spans residues 131–209; that stretch reads GVTKEIRIPT…CHGHGRVERS (79 aa). The Zn(2+) site is built by Cys-144, Cys-147, Cys-161, Cys-164, Cys-183, Cys-186, Cys-197, and Cys-200. CXXCXGXG motif repeat units follow at residues 144-151, 161-168, 183-190, and 197-204; these read CDVCHGSG, CPTCHGSG, CPHCQGRG, and CNKCHGHG.

The protein belongs to the DnaJ family. In terms of assembly, homodimer. The cofactor is Zn(2+).

It is found in the cytoplasm. Functionally, participates actively in the response to hyperosmotic and heat shock by preventing the aggregation of stress-denatured proteins and by disaggregating proteins, also in an autonomous, DnaK-independent fashion. Unfolded proteins bind initially to DnaJ; upon interaction with the DnaJ-bound protein, DnaK hydrolyzes its bound ATP, resulting in the formation of a stable complex. GrpE releases ADP from DnaK; ATP binding to DnaK triggers the release of the substrate protein, thus completing the reaction cycle. Several rounds of ATP-dependent interactions between DnaJ, DnaK and GrpE are required for fully efficient folding. Also involved, together with DnaK and GrpE, in the DNA replication of plasmids through activation of initiation proteins. The chain is Chaperone protein DnaJ from Escherichia coli O157:H7 (strain EC4115 / EHEC).